The sequence spans 131 residues: Large ribosomal subunit protein bL17 (131 aa).

This sequence belongs to the bacterial ribosomal protein bL17 family. In terms of assembly, part of the 50S ribosomal subunit. Contacts protein L32.

The chain is Large ribosomal subunit protein bL17 from Sodalis glossinidius (strain morsitans).